The chain runs to 418 residues: Mitochondrial outer membrane protein SLC25A46 (418 aa).

A phosphoserine mark is found at Ser32 and Ser35. Residue Thr45 is modified to Phosphothreonine. A disordered region spans residues Pro46–Gln96. A Solcar 1 repeat occupies Gln96–Pro187. Helical transmembrane passes span Phe103–Leu123, Phe167–Pro187, His202–Ile222, Leu258–Ile278, Phe314–Leu334, and Val382–Ile402. A Solcar 2 repeat occupies Asp311–Asn416.

The protein belongs to the mitochondrial carrier (TC 2.A.29) family. Associates with the mitochondrial contact site and cristae organizing system (MICOS) complex. May associate with the endoplasmic reticulum membrane protein complex (EMC). In terms of tissue distribution, widely expressed. Highly expressed in hindbrain, spinal cord and brain coronal sections containing corpus callosum, fornix, optic chiasm, thalamus, hypothalamus, midbrain, pons and cerebellum.

It localises to the mitochondrion outer membrane. Transmembrane protein of the mitochondrial outer membrane that controls mitochondrial organization. May regulate the assembly of the MICOS (mitochondrial contact site and cristae organizing system) complex which is essential to the biogenesis and dynamics of mitochondrial cristae, the inwards folds of the inner mitochondrial membrane. Through its interaction with the EMC (endoplasmic reticulum membrane protein complex), could regulate mitochondrial lipid homeostasis and thereby mitochondrial fission. This chain is Mitochondrial outer membrane protein SLC25A46, found in Rattus norvegicus (Rat).